The sequence spans 308 residues: MAKIMLGSHSVKSHGWKVAREHLCDWLILVVLGLIDIVLNVIEPFHRYIGPDMLTDLTFPFYEDTIPMWAVPIICILVPICIFIVYYYYRRDVYDLHHAILGIGFSCLVTGVTTDSIKDAVGRPRPNFFYRCFPNGKPKFHPDTKDVVCHGVKKIIKEGYKSFPSGHTSWSFAGLTFLAWYLSGKIKVFDRRGHVAKLCLVFLPILISILIGISRVDDYWHHWTDVFAGAIIGIFVASFSYLHFFPYPYDENGWAPHAYFRMLAERSTGRATTMTRTGSRGMLGNDVEPGNSASSPHDRHRESTDSDF.

6 helical membrane-spanning segments follow: residues 26–46, 66–86, 93–113, 162–182, 193–213, and 226–246; these read WLILVVLGLIDIVLNVIEPFH, IPMWAVPIICILVPICIFIVY, VYDLHHAILGIGFSCLVTGVT, SFPSGHTSWSFAGLTFLAWYL, GHVAKLCLVFLPILISILIGI, and VFAGAIIGIFVASFSYLHFFP. The tract at residues 274 to 308 is disordered; the sequence is MTRTGSRGMLGNDVEPGNSASSPHDRHRESTDSDF. Residues 296 to 308 show a composition bias toward basic and acidic residues; sequence PHDRHRESTDSDF.

This sequence belongs to the PA-phosphatase related phosphoesterase family.

The protein localises to the membrane. The chain is Probable lipid phosphate phosphatase 4 (LPP4) from Arabidopsis thaliana (Mouse-ear cress).